The following is a 62-amino-acid chain: Large ribosomal subunit protein eL24 (62 aa).

Cys-6, Cys-9, Cys-32, and Cys-36 together coordinate Zn(2+). Residues 6-36 form a C4-type zinc finger; sequence CYFCGQMLEPGTGKLYIKKDGSTYFMCSSKC.

This sequence belongs to the eukaryotic ribosomal protein eL24 family. In terms of assembly, part of the 50S ribosomal subunit. Forms a cluster with proteins L3 and L14. The cofactor is Zn(2+).

Functionally, binds to the 23S rRNA. This is Large ribosomal subunit protein eL24 from Methanosarcina mazei (strain ATCC BAA-159 / DSM 3647 / Goe1 / Go1 / JCM 11833 / OCM 88) (Methanosarcina frisia).